The chain runs to 219 residues: Orotate phosphoribosyltransferase (219 aa).

K26 serves as a coordination point for 5-phospho-alpha-D-ribose 1-diphosphate. Residue 34–35 (FF) participates in orotate binding. 5-phospho-alpha-D-ribose 1-diphosphate contacts are provided by residues 72 to 73 (YK), R98, K99, K102, H104, and 124 to 132 (DDVITAGTA). Orotate-binding residues include T128 and R156.

Belongs to the purine/pyrimidine phosphoribosyltransferase family. PyrE subfamily. Homodimer. The cofactor is Mg(2+).

It carries out the reaction orotidine 5'-phosphate + diphosphate = orotate + 5-phospho-alpha-D-ribose 1-diphosphate. It functions in the pathway pyrimidine metabolism; UMP biosynthesis via de novo pathway; UMP from orotate: step 1/2. Functionally, catalyzes the transfer of a ribosyl phosphate group from 5-phosphoribose 1-diphosphate to orotate, leading to the formation of orotidine monophosphate (OMP). This chain is Orotate phosphoribosyltransferase, found in Xanthomonas oryzae pv. oryzae (strain MAFF 311018).